The primary structure comprises 295 residues: GTPase Era (295 aa).

The Era-type G domain occupies 4-171; the sequence is KSGFVTIIGR…IKQIVSFLPE (168 aa). The tract at residues 12-19 is G1; it reads GRPNVGKS. Position 12–19 (12–19) interacts with GTP; sequence GRPNVGKS. The tract at residues 38 to 42 is G2; that stretch reads QTTRN. The G3 stretch occupies residues 59–62; sequence DTPG. GTP contacts are provided by residues 59-63 and 121-124; these read DTPGI and NKID. The G4 stretch occupies residues 121 to 124; that stretch reads NKID. The segment at 150 to 152 is G5; sequence ISA. The KH type-2 domain occupies 202 to 280; that stretch reads LDQEIPHGIA…FLELWVKVNE (79 aa).

This sequence belongs to the TRAFAC class TrmE-Era-EngA-EngB-Septin-like GTPase superfamily. Era GTPase family. As to quaternary structure, monomer.

It localises to the cytoplasm. Its subcellular location is the cell membrane. An essential GTPase that binds both GDP and GTP, with rapid nucleotide exchange. Plays a role in 16S rRNA processing and 30S ribosomal subunit biogenesis and possibly also in cell cycle regulation and energy metabolism. The polypeptide is GTPase Era (Alkaliphilus metalliredigens (strain QYMF)).